The chain runs to 361 residues: S-adenosylmethionine:tRNA ribosyltransferase-isomerase (361 aa).

This sequence belongs to the QueA family. As to quaternary structure, monomer.

The protein resides in the cytoplasm. It catalyses the reaction 7-aminomethyl-7-carbaguanosine(34) in tRNA + S-adenosyl-L-methionine = epoxyqueuosine(34) in tRNA + adenine + L-methionine + 2 H(+). It participates in tRNA modification; tRNA-queuosine biosynthesis. Functionally, transfers and isomerizes the ribose moiety from AdoMet to the 7-aminomethyl group of 7-deazaguanine (preQ1-tRNA) to give epoxyqueuosine (oQ-tRNA). This is S-adenosylmethionine:tRNA ribosyltransferase-isomerase from Haemophilus ducreyi (strain 35000HP / ATCC 700724).